The chain runs to 367 residues: 3-isopropylmalate dehydrogenase (367 aa).

Residue 80–93 (GKEWTHLPADEQPE) participates in NAD(+) binding. 4 residues coordinate substrate: R101, R111, R140, and D230. Residues D230, D254, and D258 each contribute to the Mg(2+) site. 288–300 (GSAPDLKGKNIAN) provides a ligand contact to NAD(+).

This sequence belongs to the isocitrate and isopropylmalate dehydrogenases family. LeuB type 1 subfamily. In terms of assembly, homodimer. Requires Mg(2+) as cofactor. Mn(2+) serves as cofactor.

Its subcellular location is the cytoplasm. The catalysed reaction is (2R,3S)-3-isopropylmalate + NAD(+) = 4-methyl-2-oxopentanoate + CO2 + NADH. Its pathway is amino-acid biosynthesis; L-leucine biosynthesis; L-leucine from 3-methyl-2-oxobutanoate: step 3/4. Its function is as follows. Catalyzes the oxidation of 3-carboxy-2-hydroxy-4-methylpentanoate (3-isopropylmalate) to 3-carboxy-4-methyl-2-oxopentanoate. The product decarboxylates to 4-methyl-2 oxopentanoate. This Buchnera aphidicola subsp. Cinara cedri (strain Cc) protein is 3-isopropylmalate dehydrogenase (leuB).